The sequence spans 1103 residues: Bifunctional cytochrome P450/NADPH--P450 reductase (1103 aa).

Residues 1–491 (MSTPKAEPVP…SSSEHADHAA (491 aa)) are cytochrome P450. Cysteine 415 serves as a coordination point for heme. Residues 492-1103 (GHGKAGAAKK…KERYTTDIFA (612 aa)) form an NADPH--P450 reductase region. Positions 508–649 (MHVYYGSNTG…DFDTWGETSF (142 aa)) constitute a Flavodoxin-like domain. FMN contacts are provided by residues 514–519 (SNTGTC), 561–564 (SYEG), cysteine 596, and threonine 604. Residues 685-924 (LQLQEGLVVE…RPSHTGFKPP (240 aa)) form the FAD-binding FR-type domain.

In the N-terminal section; belongs to the cytochrome P450 family. It depends on heme as a cofactor. FAD serves as cofactor. The cofactor is FMN.

The catalysed reaction is 2 oxidized [cytochrome P450] + NADPH = 2 reduced [cytochrome P450] + NADP(+) + H(+). The enzyme catalyses an organic molecule + reduced [NADPH--hemoprotein reductase] + O2 = an alcohol + oxidized [NADPH--hemoprotein reductase] + H2O + H(+). Functionally, functions as a fatty acid monooxygenase. Also displays a NADPH-dependent reductase activity in the C-terminal domain, which allows electron transfer from NADPH to the heme iron of the cytochrome P450 N-terminal domain. The polypeptide is Bifunctional cytochrome P450/NADPH--P450 reductase (Aspergillus oryzae (strain ATCC 42149 / RIB 40) (Yellow koji mold)).